We begin with the raw amino-acid sequence, 367 residues long: Flagellar P-ring protein (367 aa).

An N-terminal signal peptide occupies residues 1–21; the sequence is MYVFKALAGIVLALVATLAHA.

It belongs to the FlgI family. The basal body constitutes a major portion of the flagellar organelle and consists of four rings (L,P,S, and M) mounted on a central rod.

It localises to the periplasm. It is found in the bacterial flagellum basal body. Assembles around the rod to form the L-ring and probably protects the motor/basal body from shearing forces during rotation. This is Flagellar P-ring protein from Salmonella arizonae (strain ATCC BAA-731 / CDC346-86 / RSK2980).